The chain runs to 149 residues: MSGASARDATFLAFDYGEKRIGVALGNALTRSARALVVIPNLNREHRFKAVGELLAEWRPDALVVGLPMHPDGTPHDMTQQAKRFGNQLNGRFGLPVTWVDERYSSVEAEAGLRERNVRGRARTDMLDAEAARVILQQYFDELSDHEHH.

The protein belongs to the YqgF nuclease family.

It is found in the cytoplasm. In terms of biological role, could be a nuclease involved in processing of the 5'-end of pre-16S rRNA. The chain is Putative pre-16S rRNA nuclease from Burkholderia vietnamiensis (strain G4 / LMG 22486) (Burkholderia cepacia (strain R1808)).